A 190-amino-acid chain; its full sequence is MPNITCREQPARARRGGEKHIMIRSATPVTEILVVADCWRAEAGAEAVIHRAIATAAGMVDKDTGDAELAIMLTDDAGIRTLNANWRGLDKPTNVLSFPALQPTGPCLPDDPPRMLGDIAIAYETLRREAGDERKTFDHHLSHLAVHGFLHLIGYDHETDGEAEEMESLERQILAQLGIPDPYAPPERMT.

Zn(2+) is bound by residues His147, His151, and His157.

Belongs to the endoribonuclease YbeY family. Zn(2+) is required as a cofactor.

The protein localises to the cytoplasm. Its function is as follows. Single strand-specific metallo-endoribonuclease involved in late-stage 70S ribosome quality control and in maturation of the 3' terminus of the 16S rRNA. This is Endoribonuclease YbeY from Nitrobacter winogradskyi (strain ATCC 25391 / DSM 10237 / CIP 104748 / NCIMB 11846 / Nb-255).